The following is a 137-amino-acid chain: Basic phospholipase A2 DsM-S1 (137 aa).

An N-terminal signal peptide occupies residues 1-16 (MRTLWIVAVCLIGVEG). 7 disulfide bridges follow: Cys42–Cys131, Cys44–Cys60, Cys59–Cys111, Cys65–Cys137, Cys66–Cys104, Cys73–Cys97, and Cys91–Cys102. The Ca(2+) site is built by Tyr43, Gly45, and Gly47. Residue His63 is part of the active site. Residue Asp64 participates in Ca(2+) binding. The active site involves Asp105.

Belongs to the phospholipase A2 family. Group II subfamily. D49 sub-subfamily. The cofactor is Ca(2+). Expressed by the venom gland.

The protein localises to the secreted. The enzyme catalyses a 1,2-diacyl-sn-glycero-3-phosphocholine + H2O = a 1-acyl-sn-glycero-3-phosphocholine + a fatty acid + H(+). Its function is as follows. Snake venom phospholipase A2 (PLA2) that is neurotoxic. PLA2 catalyzes the calcium-dependent hydrolysis of the 2-acyl groups in 3-sn-phosphoglycerides. The chain is Basic phospholipase A2 DsM-S1 from Daboia siamensis (Eastern Russel's viper).